A 129-amino-acid chain; its full sequence is MSNIPSDLRYATTHEWVRPEGDGTFTVGISEHAQELLGDMVFVELPDVGATVSAGDDIAVAESVKAASDVYAPIGGEIVGVNEDLEDSPELVNSDPYGDGWLFRIKADDADEVEGLLDAEGYENSIEEE.

One can recognise a Lipoyl-binding domain in the interval 24-106 (TFTVGISEHA…YGDGWLFRIK (83 aa)). N6-lipoyllysine is present on lysine 65.

This sequence belongs to the GcvH family. As to quaternary structure, the glycine cleavage system is composed of four proteins: P, T, L and H. (R)-lipoate serves as cofactor.

Its function is as follows. The glycine cleavage system catalyzes the degradation of glycine. The H protein shuttles the methylamine group of glycine from the P protein to the T protein. This is Glycine cleavage system H protein from Pseudoalteromonas atlantica (strain T6c / ATCC BAA-1087).